We begin with the raw amino-acid sequence, 584 residues long: Actin-binding protein IPP (584 aa).

Residues 37 to 104 (CDVQLQVGKE…IYTGVVNIAV (68 aa)) enclose the BTB domain. 6 Kelch repeats span residues 296–343 (YTRL…VVGG), 344–390 (MVYA…VCYG), 391–437 (AIYA…EMQG), 439–485 (IYAV…ALND), 487–533 (IYAI…TVNG), and 535–583 (LYVS…GVAV).

As to expression, expression seems confined to tissues derived from trophectoderm and primitive endoderm.

It localises to the cytoplasm. Its subcellular location is the cytoskeleton. Its function is as follows. May play a role in organizing the actin cytoskeleton. This Mus musculus (Mouse) protein is Actin-binding protein IPP (Ipp).